A 141-amino-acid polypeptide reads, in one-letter code: 6,7-dimethyl-8-ribityllumazine synthase (141 aa).

5-amino-6-(D-ribitylamino)uracil is bound by residues F14, 46–48 (VFD), and 70–72 (CVI). Position 75–76 (75–76 (ET)) interacts with (2S)-2-hydroxy-3-oxobutyl phosphate. Residue H78 is the Proton donor of the active site. L103 lines the 5-amino-6-(D-ribitylamino)uracil pocket. R118 contributes to the (2S)-2-hydroxy-3-oxobutyl phosphate binding site.

As to quaternary structure, forms an icosahedral capsid composed of 60 subunits, arranged as a dodecamer of pentamers.

It carries out the reaction (2S)-2-hydroxy-3-oxobutyl phosphate + 5-amino-6-(D-ribitylamino)uracil = 6,7-dimethyl-8-(1-D-ribityl)lumazine + phosphate + 2 H2O + H(+). The protein operates within cofactor biosynthesis; riboflavin biosynthesis; riboflavin from 2-hydroxy-3-oxobutyl phosphate and 5-amino-6-(D-ribitylamino)uracil: step 1/2. Its function is as follows. Catalyzes the formation of 6,7-dimethyl-8-ribityllumazine by condensation of 5-amino-6-(D-ribitylamino)uracil with 3,4-dihydroxy-2-butanone 4-phosphate. This is the penultimate step in the biosynthesis of riboflavin. The chain is 6,7-dimethyl-8-ribityllumazine synthase (ribH) from Methanocaldococcus jannaschii (strain ATCC 43067 / DSM 2661 / JAL-1 / JCM 10045 / NBRC 100440) (Methanococcus jannaschii).